Reading from the N-terminus, the 383-residue chain is Acetylornithine deacetylase (383 aa).

His80 contacts Zn(2+). The active site involves Asp82. Asp112 serves as a coordination point for Zn(2+). Glu144 is an active-site residue. Residues Glu145, Glu169, and His355 each coordinate Zn(2+).

Belongs to the peptidase M20A family. ArgE subfamily. In terms of assembly, homodimer. Requires Zn(2+) as cofactor. Co(2+) is required as a cofactor. Glutathione serves as cofactor.

It is found in the cytoplasm. The catalysed reaction is N(2)-acetyl-L-ornithine + H2O = L-ornithine + acetate. It participates in amino-acid biosynthesis; L-arginine biosynthesis; L-ornithine from N(2)-acetyl-L-ornithine (linear): step 1/1. Its function is as follows. Catalyzes the hydrolysis of the amide bond of N(2)-acetylated L-amino acids. Cleaves the acetyl group from N-acetyl-L-ornithine to form L-ornithine, an intermediate in L-arginine biosynthesis pathway, and a branchpoint in the synthesis of polyamines. The sequence is that of Acetylornithine deacetylase from Escherichia coli O157:H7.